The sequence spans 289 residues: Formamidopyrimidine-DNA glycosylase (289 aa).

The Schiff-base intermediate with DNA role is filled by proline 2. Glutamate 3 acts as the Proton donor in catalysis. The Proton donor; for beta-elimination activity role is filled by lysine 61. Histidine 96, arginine 115, and lysine 161 together coordinate DNA. The FPG-type zinc finger occupies 247 to 281; that stretch reads SAYGQEDRPCPRCGTAIRREKFMNRSSFSCPKCQR. Arginine 271 functions as the Proton donor; for delta-elimination activity in the catalytic mechanism.

This sequence belongs to the FPG family. As to quaternary structure, monomer. Zn(2+) serves as cofactor.

The enzyme catalyses Hydrolysis of DNA containing ring-opened 7-methylguanine residues, releasing 2,6-diamino-4-hydroxy-5-(N-methyl)formamidopyrimidine.. The catalysed reaction is 2'-deoxyribonucleotide-(2'-deoxyribose 5'-phosphate)-2'-deoxyribonucleotide-DNA = a 3'-end 2'-deoxyribonucleotide-(2,3-dehydro-2,3-deoxyribose 5'-phosphate)-DNA + a 5'-end 5'-phospho-2'-deoxyribonucleoside-DNA + H(+). In terms of biological role, involved in base excision repair of DNA damaged by oxidation or by mutagenic agents. Acts as a DNA glycosylase that recognizes and removes damaged bases. Has a preference for oxidized purines, such as 7,8-dihydro-8-oxoguanine (8-oxoG). Has AP (apurinic/apyrimidinic) lyase activity and introduces nicks in the DNA strand. Cleaves the DNA backbone by beta-delta elimination to generate a single-strand break at the site of the removed base with both 3'- and 5'-phosphates. The sequence is that of Formamidopyrimidine-DNA glycosylase from Rhodococcus opacus (strain B4).